We begin with the raw amino-acid sequence, 357 residues long: UDP-N-acetylglucosamine--N-acetylmuramyl-(pentapeptide) pyrophosphoryl-undecaprenol N-acetylglucosamine transferase (357 aa).

UDP-N-acetyl-alpha-D-glucosamine is bound by residues threonine 12–glycine 14, asparagine 124, arginine 163, serine 189, isoleucine 243, alanine 262–glutamate 267, and glutamine 288.

This sequence belongs to the glycosyltransferase 28 family. MurG subfamily.

It localises to the cell inner membrane. The catalysed reaction is di-trans,octa-cis-undecaprenyl diphospho-N-acetyl-alpha-D-muramoyl-L-alanyl-D-glutamyl-meso-2,6-diaminopimeloyl-D-alanyl-D-alanine + UDP-N-acetyl-alpha-D-glucosamine = di-trans,octa-cis-undecaprenyl diphospho-[N-acetyl-alpha-D-glucosaminyl-(1-&gt;4)]-N-acetyl-alpha-D-muramoyl-L-alanyl-D-glutamyl-meso-2,6-diaminopimeloyl-D-alanyl-D-alanine + UDP + H(+). It functions in the pathway cell wall biogenesis; peptidoglycan biosynthesis. Cell wall formation. Catalyzes the transfer of a GlcNAc subunit on undecaprenyl-pyrophosphoryl-MurNAc-pentapeptide (lipid intermediate I) to form undecaprenyl-pyrophosphoryl-MurNAc-(pentapeptide)GlcNAc (lipid intermediate II). The sequence is that of UDP-N-acetylglucosamine--N-acetylmuramyl-(pentapeptide) pyrophosphoryl-undecaprenol N-acetylglucosamine transferase from Pseudomonas paraeruginosa (strain DSM 24068 / PA7) (Pseudomonas aeruginosa (strain PA7)).